Reading from the N-terminus, the 1079-residue chain is Error-prone DNA polymerase (1079 aa).

The protein belongs to the DNA polymerase type-C family. DnaE2 subfamily.

The protein localises to the cytoplasm. It catalyses the reaction DNA(n) + a 2'-deoxyribonucleoside 5'-triphosphate = DNA(n+1) + diphosphate. DNA polymerase involved in damage-induced mutagenesis and translesion synthesis (TLS). It is not the major replicative DNA polymerase. The chain is Error-prone DNA polymerase from Ralstonia pickettii (strain 12J).